The chain runs to 101 residues: Ferredoxin Fdx2 (101 aa).

4Fe-4S ferredoxin-type domains are found at residues 1 to 29 and 31 to 64; these read MATY…EGDE and YVID…PNPQ. [4Fe-4S] cluster contacts are provided by Cys9, Cys12, Cys15, Cys19, Cys38, Cys41, Cys50, and Cys54.

[4Fe-4S] cluster is required as a cofactor.

Ferredoxins are iron-sulfur proteins that transfer electrons in a wide variety of metabolic reactions. Fdx2 can receive electrons from both FdR_A and FdR_B ferredoxin reductases, with a preference for FdR_B compared with FdR_A, and transfer the electrons to the cytochrome P450 CYP260A1. In Sorangium cellulosum (strain So ce56) (Polyangium cellulosum (strain So ce56)), this protein is Ferredoxin Fdx2.